A 338-amino-acid polypeptide reads, in one-letter code: Lipoate-protein ligase A (338 aa).

One can recognise a BPL/LPL catalytic domain in the interval 29 to 216 (DPNQRVLFLW…AFFSHYGERV (188 aa)). ATP contacts are provided by residues Arg71, 76–79 (GAVF), and Lys134. Lys134 provides a ligand contact to (R)-lipoate.

This sequence belongs to the LplA family. In terms of assembly, monomer.

The protein resides in the cytoplasm. The catalysed reaction is L-lysyl-[lipoyl-carrier protein] + (R)-lipoate + ATP = N(6)-[(R)-lipoyl]-L-lysyl-[lipoyl-carrier protein] + AMP + diphosphate + H(+). Its pathway is protein modification; protein lipoylation via exogenous pathway; protein N(6)-(lipoyl)lysine from lipoate: step 1/2. It functions in the pathway protein modification; protein lipoylation via exogenous pathway; protein N(6)-(lipoyl)lysine from lipoate: step 2/2. In terms of biological role, catalyzes both the ATP-dependent activation of exogenously supplied lipoate to lipoyl-AMP and the transfer of the activated lipoyl onto the lipoyl domains of lipoate-dependent enzymes. The sequence is that of Lipoate-protein ligase A from Aeromonas hydrophila subsp. hydrophila (strain ATCC 7966 / DSM 30187 / BCRC 13018 / CCUG 14551 / JCM 1027 / KCTC 2358 / NCIMB 9240 / NCTC 8049).